Reading from the N-terminus, the 178-residue chain is Ribosome maturation factor RimP (178 aa).

Belongs to the RimP family.

It is found in the cytoplasm. Functionally, required for maturation of 30S ribosomal subunits. The chain is Ribosome maturation factor RimP from Mycolicibacterium paratuberculosis (strain ATCC BAA-968 / K-10) (Mycobacterium paratuberculosis).